We begin with the raw amino-acid sequence, 176 residues long: MLTTIAIQIPDGSAIFVLLTFILLMFILKKLAWGPITKIMDARANQINDDLDSAAKSKNEAKKLQTVADTNLKESQSQATALMENARKSSEEQSKKIVDLAQAHADSINRQAQIDARQIKDDALDSAKDEIADLSVSIASRIIGKEITASKHKALIDDFISELEKQQENSPVKEKS.

A helical transmembrane segment spans residues 7–27 (IQIPDGSAIFVLLTFILLMFI). Positions 75 to 94 (SQSQATALMENARKSSEEQS) are disordered. A compositionally biased stretch (basic and acidic residues) spans 85 to 94 (NARKSSEEQS).

The protein belongs to the ATPase B chain family. As to quaternary structure, F-type ATPases have 2 components, F(1) - the catalytic core - and F(0) - the membrane proton channel. F(1) has five subunits: alpha(3), beta(3), gamma(1), delta(1), epsilon(1). F(0) has three main subunits: a(1), b(2) and c(10-14). The alpha and beta chains form an alternating ring which encloses part of the gamma chain. F(1) is attached to F(0) by a central stalk formed by the gamma and epsilon chains, while a peripheral stalk is formed by the delta and b chains.

Its subcellular location is the cell membrane. In terms of biological role, f(1)F(0) ATP synthase produces ATP from ADP in the presence of a proton or sodium gradient. F-type ATPases consist of two structural domains, F(1) containing the extramembraneous catalytic core and F(0) containing the membrane proton channel, linked together by a central stalk and a peripheral stalk. During catalysis, ATP synthesis in the catalytic domain of F(1) is coupled via a rotary mechanism of the central stalk subunits to proton translocation. Functionally, component of the F(0) channel, it forms part of the peripheral stalk, linking F(1) to F(0). This chain is ATP synthase subunit b, found in Oenococcus oeni (strain ATCC BAA-331 / PSU-1).